The following is a 188-amino-acid chain: Elongation factor P-like protein (188 aa).

This sequence belongs to the elongation factor P family.

The polypeptide is Elongation factor P-like protein (Aliivibrio fischeri (strain ATCC 700601 / ES114) (Vibrio fischeri)).